The primary structure comprises 141 residues: uncharacterized protein (141 aa).

This is an uncharacterized protein from Human cytomegalovirus (strain AD169) (HHV-5).